The sequence spans 310 residues: MPSTKVAALSAVLALASTVAGHGFVQNIVIDGKSYSGYLVNQFPYESNPPAVIGWATTATDLGFVAPSEYTNADIICHKNATPGALSAPVAAGGTVELQWTTWPDSHHGPVISYLANCNGNCSTVDKTKLNFVKIDQGGLIDDTTPPGTWASDKLIAANNSWTVTIPSTIAPGNYVLRHEIIALHSAGNADGAQNYPQCINLEITGSGTAAPSGTAGEKLYTSTDPGILVNIYQSFGAANGAVATGSATAVATTAAASATATPTTLVTSVAPASSTSATAVVTTVAPAVTDVVTVTDVVTVTTVITTTVL.

Residues 1–21 form the signal peptide; sequence MPSTKVAALSAVLALASTVAG. Residues His22 and His107 each coordinate Cu(2+). Intrachain disulfides connect Cys77–Cys199 and Cys118–Cys122. Asn121 and Asn159 each carry an N-linked (GlcNAc...) asparagine glycan. Residue His185 coordinates O2. Residue Tyr196 coordinates Cu(2+).

It belongs to the polysaccharide monooxygenase AA9 family. The cofactor is Cu(2+).

The protein resides in the secreted. It catalyses the reaction [(1-&gt;4)-beta-D-glucosyl]n+m + reduced acceptor + O2 = 4-dehydro-beta-D-glucosyl-[(1-&gt;4)-beta-D-glucosyl]n-1 + [(1-&gt;4)-beta-D-glucosyl]m + acceptor + H2O.. Its function is as follows. Lytic polysaccharide monooxygenase (LPMO) that depolymerizes crystalline and amorphous polysaccharides via the oxidation of scissile alpha- or beta-(1-4)-glycosidic bonds, yielding C1, C4 as well as C6 oxidation products. Catalysis by LPMOs requires the reduction of the active-site copper from Cu(II) to Cu(I) by a reducing agent and H(2)O(2) or O(2) as a cosubstrate. Active on cellulose, but not on xylan, starch, or chitin. This is AA9 family lytic polysaccharide monooxygenase A from Talaromyces pinophilus (Penicillium pinophilum).